We begin with the raw amino-acid sequence, 836 residues long: Probable ribonuclease ZC3H12B (836 aa).

The disordered stretch occupies residues 1-92 (MTATAEVETP…SPCLDRPSFS (92 aa)). The span at 8–28 (ETPKMEKSASKEEKQQPKQDS) shows a compositional bias: basic and acidic residues. Acidic residues predominate over residues 35-46 (DSEEWMSSESDP). Residues 50–60 (SLKSSDNSKSC) are compositionally biased toward polar residues. Basic residues predominate over residues 70-80 (KEMHSKPHRQL). Positions 190-345 (LRPVVIDGSN…LGRHGPSLEN (156 aa)) constitute an RNase NYN domain. The segment at 355–380 (EHKKQPCPYGKKCTYGHKCKYYHPER) adopts a C3H1-type zinc-finger fold.

The protein belongs to the ZC3H12 family. The cofactor is Mg(2+).

In terms of biological role, may function as RNase and regulate the levels of target RNA species. The polypeptide is Probable ribonuclease ZC3H12B (ZC3H12B) (Homo sapiens (Human)).